The chain runs to 137 residues: Putative pre-16S rRNA nuclease (137 aa).

It belongs to the YqgF nuclease family.

The protein resides in the cytoplasm. Functionally, could be a nuclease involved in processing of the 5'-end of pre-16S rRNA. The protein is Putative pre-16S rRNA nuclease of Buchnera aphidicola subsp. Schizaphis graminum (strain Sg).